A 336-amino-acid polypeptide reads, in one-letter code: Alcohol dehydrogenase (336 aa).

Residues Cys-37, His-58, Cys-89, Cys-92, Cys-95, Cys-103, and Cys-145 each contribute to the Zn(2+) site.

It belongs to the zinc-containing alcohol dehydrogenase family. Requires Zn(2+) as cofactor.

It catalyses the reaction a primary alcohol + NAD(+) = an aldehyde + NADH + H(+). It carries out the reaction a secondary alcohol + NAD(+) = a ketone + NADH + H(+). The sequence is that of Alcohol dehydrogenase (adh) from Staphylococcus aureus (strain USA300).